We begin with the raw amino-acid sequence, 352 residues long: MSLYCRTFFRRKSFGCYRLLSTYVTKARYLFELKEDEEACRKAQKTGVFYLFHDLDPLLQASGHRYLVPRLSRAELEGLLGKFGQDSQRIEDSVLVGCSEQQEAWFALDLGLKSASSSRASLPKSEMEAELGGSFIKLRQALFQLNSVDSSLLFTAQALLRWHDGHQFCSKSGQPTQKNVAGSKRVCPSSKIIYYPQMAPVVITLVSDGARCLLARQSSFPKGLYSALAGFCDIGESVEETVHREVAEEVGLEVENIQYSASQHWPFPNSSLMIACHATVKPGHTEIQVNLKELEAAAWFSLDEVTTALRRKGSLALQPSEASPLLLPPKLAIAHHLIKKWVETRSCSSLAA.

The transit peptide at 1-20 directs the protein to the mitochondrion; sequence MSLYCRTFFRRKSFGCYRLL. In terms of domain architecture, Nudix hydrolase spans 196 to 323; it reads PQMAPVVITL…SLALQPSEAS (128 aa). Residues 216-240 carry the Nudix box motif; the sequence is RQSSFPKGLYSALAGFCDIGESVEE.

Belongs to the Nudix hydrolase family. It depends on Mg(2+) as a cofactor. Mn(2+) is required as a cofactor.

The protein resides in the mitochondrion. The catalysed reaction is NADH + H2O = reduced beta-nicotinamide D-ribonucleotide + AMP + 2 H(+). It carries out the reaction NAD(+) + H2O = beta-nicotinamide D-ribonucleotide + AMP + 2 H(+). The enzyme catalyses NADPH + H2O = reduced beta-nicotinamide D-ribonucleotide + adenosine 2',5'-bisphosphate + 2 H(+). In terms of biological role, NAD(P)H pyrophosphatase that hydrolyzes NADH into NMNH and AMP, and NADPH into NMNH and 2',5'-ADP. Has a marked preference for the reduced pyridine nucleotides. Does not show activity toward NAD-capped RNAs; the NAD-cap is an atypical cap present at the 5'-end of some RNAs. The sequence is that of NAD(P)H pyrophosphatase NUDT13, mitochondrial from Mus musculus (Mouse).